Reading from the N-terminus, the 356-residue chain is Gluconolactonase (356 aa).

Residues 1 to 35 constitute a signal peptide (tat-type signal); that stretch reads MTTGRMSRRECLSAAVMVPIAAMTATATITGSAQA.

In terms of assembly, homodimer. Post-translationally, predicted to be exported by the Tat system. The position of the signal peptide cleavage has been experimentally proven.

The protein localises to the periplasm. The catalysed reaction is D-glucono-1,5-lactone + H2O = D-gluconate + H(+). It participates in carbohydrate acid metabolism; D-gluconate biosynthesis; D-gluconate from D-glucono-1,5-lactone: step 1/1. Functionally, hydrolyzes the gluconolactone formed by glucose-fructose oxidoreductase, and that formed in aerobic conditions by the glucose dehydrogenase present. In Zymomonas mobilis subsp. mobilis (strain ATCC 31821 / ZM4 / CP4), this protein is Gluconolactonase (gnl).